Consider the following 317-residue polypeptide: Transaldolase (317 aa).

Residue lysine 126 is the Schiff-base intermediate with substrate of the active site.

The protein belongs to the transaldolase family. Type 1 subfamily. As to quaternary structure, homodimer.

The protein localises to the cytoplasm. The catalysed reaction is D-sedoheptulose 7-phosphate + D-glyceraldehyde 3-phosphate = D-erythrose 4-phosphate + beta-D-fructose 6-phosphate. It participates in carbohydrate degradation; pentose phosphate pathway; D-glyceraldehyde 3-phosphate and beta-D-fructose 6-phosphate from D-ribose 5-phosphate and D-xylulose 5-phosphate (non-oxidative stage): step 2/3. Transaldolase is important for the balance of metabolites in the pentose-phosphate pathway. The protein is Transaldolase of Burkholderia vietnamiensis (strain G4 / LMG 22486) (Burkholderia cepacia (strain R1808)).